The sequence spans 302 residues: Large ribosomal subunit protein uL29m (302 aa).

Residues 1–38 (MASSGAARPAASRVLQRCQPFSSSTSCAAPVTTWRTLA) constitute a mitochondrion transit peptide. Positions 255-302 (EPVADHLETPETSGQEKVGELSPAGAVDPSTILASKTGKPVTDAPRSS) are disordered.

This sequence belongs to the universal ribosomal protein uL29 family. In terms of assembly, component of the mitochondrial large ribosomal subunit. Mature mitochondrial ribosomes consist of a small (37S) and a large (54S) subunit. The 37S subunit contains at least 33 different proteins and 1 molecule of RNA (15S). The 54S subunit contains at least 45 different proteins and 1 molecule of RNA (21S).

The protein resides in the mitochondrion. The chain is Large ribosomal subunit protein uL29m (MRPL4) from Pyricularia oryzae (strain 70-15 / ATCC MYA-4617 / FGSC 8958) (Rice blast fungus).